The chain runs to 547 residues: Cytochrome P450 monooxygenase 128 (547 aa).

The chain crosses the membrane as a helical span at residues 9-25 (IPWAAGATLLAWAAYKI). N-linked (GlcNAc...) asparagine glycans are attached at residues Asn-336 and Asn-438. Cys-483 serves as a coordination point for heme.

This sequence belongs to the cytochrome P450 family. Heme serves as cofactor.

The protein localises to the membrane. The protein operates within secondary metabolite biosynthesis. In terms of biological role, cytochrome P450 monooxygenase that is able to use 7-ethoxycoumarin and testosterone as substrates for oxidation. This chain is Cytochrome P450 monooxygenase 128, found in Postia placenta (strain ATCC 44394 / Madison 698-R) (Brown rot fungus).